The chain runs to 342 residues: Isopentenyl-diphosphate delta-isomerase (342 aa).

A substrate-binding site is contributed by 11-12 (RK). Residues S68, 69 to 71 (SMT), S99, and N128 each bind FMN. Residue 99-101 (SQR) participates in substrate binding. Q162 lines the substrate pocket. A Mg(2+)-binding site is contributed by E163. FMN is bound by residues K194, S219, T224, 275–277 (GVR), and 296–297 (AK).

Belongs to the IPP isomerase type 2 family. In terms of assembly, homooctamer. Dimer of tetramers. Requires FMN as cofactor. NADPH is required as a cofactor. It depends on Mg(2+) as a cofactor.

The protein resides in the cytoplasm. It catalyses the reaction isopentenyl diphosphate = dimethylallyl diphosphate. Functionally, involved in the biosynthesis of isoprenoids. Catalyzes the 1,3-allylic rearrangement of the homoallylic substrate isopentenyl (IPP) to its allylic isomer, dimethylallyl diphosphate (DMAPP). The polypeptide is Isopentenyl-diphosphate delta-isomerase (Legionella pneumophila (strain Paris)).